Consider the following 657-residue polypeptide: Probable serine/threonine-protein kinase CA_C1728 (657 aa).

The 265-residue stretch at 10-274 (YKIEEEIGVG…ELSNVKNNYV (265 aa)) folds into the Protein kinase domain. ATP is bound by residues 16 to 24 (IGVGGTAVV) and lysine 39. The active-site Proton acceptor is aspartate 143. A disordered region spans residues 286 to 334 (PAQIQNESNPNNKLDNDDTYYNGEPYNKEQPQEEPQEENEEPKNKIKGN). Residues 288 to 298 (QIQNESNPNNK) are compositionally biased toward polar residues. PASTA domains lie at 375–441 (SVSK…DISS), 443–509 (DTDQ…VISR), and 512–577 (EVKK…VIGR). The disordered stretch occupies residues 581 to 657 (TAVQPPNNNN…TNTPNGTGQK (77 aa)). Composition is skewed to low complexity over residues 584–600 (QPPN…QNQN), 613–637 (PTGG…PAGG), and 645–657 (GNVT…TGQK).

Belongs to the protein kinase superfamily. Ser/Thr protein kinase family.

It catalyses the reaction L-seryl-[protein] + ATP = O-phospho-L-seryl-[protein] + ADP + H(+). The enzyme catalyses L-threonyl-[protein] + ATP = O-phospho-L-threonyl-[protein] + ADP + H(+). The sequence is that of Probable serine/threonine-protein kinase CA_C1728 from Clostridium acetobutylicum (strain ATCC 824 / DSM 792 / JCM 1419 / IAM 19013 / LMG 5710 / NBRC 13948 / NRRL B-527 / VKM B-1787 / 2291 / W).